The sequence spans 468 residues: Uronate isomerase (468 aa).

Belongs to the metallo-dependent hydrolases superfamily. Uronate isomerase family.

The enzyme catalyses D-glucuronate = D-fructuronate. The catalysed reaction is aldehydo-D-galacturonate = keto-D-tagaturonate. Its pathway is carbohydrate metabolism; pentose and glucuronate interconversion. The protein is Uronate isomerase of Marinomonas sp. (strain MWYL1).